We begin with the raw amino-acid sequence, 147 residues long: Large ribosomal subunit protein uL16 (147 aa).

Belongs to the universal ribosomal protein uL16 family. Part of the 50S ribosomal subunit.

Functionally, binds 23S rRNA and is also seen to make contacts with the A and possibly P site tRNAs. This chain is Large ribosomal subunit protein uL16, found in Clostridium novyi (strain NT).